Here is a 359-residue protein sequence, read N- to C-terminus: MGTIQVDLGNRSYPIYIASAILDKIGTYLSEQPLGKKVLLVTDQQVAPLYAPRVIESLKNAGFKVAVAEIPAGEPSKTLEQASRLYDLAFDHALDRQSSVIALGGGVVGDLAGFVAATYMRGVPFIQIPTTLLAQVDSSVGGKVAVNHSRGKNMIGAFYQPQMVMIDVATLQTLPERELKAGLAEVIKYGVIWDGSFFTWLEKNYSRILNLDTTALEQVAETCCKIKASVVEQDEREQGCRAILNYGHTVGHAIESLSGYGTYLHGEAVAMGMISAARLALNEGILSQQDFERIYRLISAVGLPTELPRGLGPQDIIDSMYHDKKTVLGKLVFVLPRSLGQVDIFKDVKEADILAVLSQ.

NAD(+) is bound by residues 106-110 (GVVGD), 130-131 (TT), K143, K152, and 170-173 (TLQT). Zn(2+) contacts are provided by E185, H248, and H265.

This sequence belongs to the sugar phosphate cyclases superfamily. Dehydroquinate synthase family. It depends on Co(2+) as a cofactor. Zn(2+) serves as cofactor. The cofactor is NAD(+).

Its subcellular location is the cytoplasm. It carries out the reaction 7-phospho-2-dehydro-3-deoxy-D-arabino-heptonate = 3-dehydroquinate + phosphate. It functions in the pathway metabolic intermediate biosynthesis; chorismate biosynthesis; chorismate from D-erythrose 4-phosphate and phosphoenolpyruvate: step 2/7. Functionally, catalyzes the conversion of 3-deoxy-D-arabino-heptulosonate 7-phosphate (DAHP) to dehydroquinate (DHQ). The sequence is that of 3-dehydroquinate synthase from Desulforamulus reducens (strain ATCC BAA-1160 / DSM 100696 / MI-1) (Desulfotomaculum reducens).